A 122-amino-acid chain; its full sequence is Large ribosomal subunit protein uL14c (122 aa).

This sequence belongs to the universal ribosomal protein uL14 family. In terms of assembly, part of the 50S ribosomal subunit.

The protein resides in the plastid. Its subcellular location is the chloroplast. Binds to 23S rRNA. In Anthoceros angustus (Hornwort), this protein is Large ribosomal subunit protein uL14c.